We begin with the raw amino-acid sequence, 485 residues long: Glutamyl-tRNA(Gln) amidotransferase subunit A (485 aa).

Catalysis depends on charge relay system residues lysine 78 and serine 153. Serine 177 acts as the Acyl-ester intermediate in catalysis.

The protein belongs to the amidase family. GatA subfamily. As to quaternary structure, heterotrimer of A, B and C subunits.

It carries out the reaction L-glutamyl-tRNA(Gln) + L-glutamine + ATP + H2O = L-glutaminyl-tRNA(Gln) + L-glutamate + ADP + phosphate + H(+). Its function is as follows. Allows the formation of correctly charged Gln-tRNA(Gln) through the transamidation of misacylated Glu-tRNA(Gln) in organisms which lack glutaminyl-tRNA synthetase. The reaction takes place in the presence of glutamine and ATP through an activated gamma-phospho-Glu-tRNA(Gln). This chain is Glutamyl-tRNA(Gln) amidotransferase subunit A, found in Desulfotalea psychrophila (strain LSv54 / DSM 12343).